The sequence spans 505 residues: Catalase (505 aa).

A disordered region spans residues 1–25 (MSQQDKKLTGVFGHPVSDRENSMTA). Residues histidine 56 and asparagine 129 contribute to the active site. Residue tyrosine 339 participates in heme binding.

The protein belongs to the catalase family. In terms of assembly, homodimer. Heme is required as a cofactor.

It catalyses the reaction 2 H2O2 = O2 + 2 H2O. Its function is as follows. Decomposes hydrogen peroxide into water and oxygen; serves to protect cells from the toxic effects of hydrogen peroxide. This chain is Catalase (katA), found in Staphylococcus aureus.